The sequence spans 404 residues: Phosphopentomutase (404 aa).

Residues Asp-10, Asp-303, His-308, Asp-344, His-345, and His-356 each coordinate Mn(2+).

The protein belongs to the phosphopentomutase family. The cofactor is Mn(2+).

The protein localises to the cytoplasm. It carries out the reaction 2-deoxy-alpha-D-ribose 1-phosphate = 2-deoxy-D-ribose 5-phosphate. The catalysed reaction is alpha-D-ribose 1-phosphate = D-ribose 5-phosphate. Its pathway is carbohydrate degradation; 2-deoxy-D-ribose 1-phosphate degradation; D-glyceraldehyde 3-phosphate and acetaldehyde from 2-deoxy-alpha-D-ribose 1-phosphate: step 1/2. Isomerase that catalyzes the conversion of deoxy-ribose 1-phosphate (dRib-1-P) and ribose 1-phosphate (Rib-1-P) to deoxy-ribose 5-phosphate (dRib-5-P) and ribose 5-phosphate (Rib-5-P), respectively. The chain is Phosphopentomutase from Shewanella sp. (strain MR-4).